We begin with the raw amino-acid sequence, 558 residues long: Putative transport protein VC0395_A0715/VC395_1212 (558 aa).

Transmembrane regions (helical) follow at residues 5 to 25, 37 to 57, 66 to 86, 92 to 112, and 164 to 184; these read VVLL…AIGL, LGNS…GFSF, FMLF…GIFF, YLIL…FGGY, and VGYA…AKLL. RCK C-terminal domains follow at residues 203–290 and 291–374; these read RGLG…FRNG and KEVF…KIGF. 6 consecutive transmembrane segments (helical) span residues 384–404, 407–427, 441–461, 476–496, 504–524, and 537–557; these read LLAF…TMTF, VSFS…LGFL, ALNM…GLNA, VIGL…LVGA, ALLF…DVVN, and AGTY…FILL.

It belongs to the AAE transporter (TC 2.A.81) family. YbjL subfamily.

The protein resides in the cell membrane. The sequence is that of Putative transport protein VC0395_A0715/VC395_1212 from Vibrio cholerae serotype O1 (strain ATCC 39541 / Classical Ogawa 395 / O395).